A 383-amino-acid polypeptide reads, in one-letter code: Probable aspartate/prephenate aminotransferase (383 aa).

L-aspartate contacts are provided by Gly39, Trp125, and Asn175. Residue Lys234 is modified to N6-(pyridoxal phosphate)lysine. Residue Arg361 coordinates L-aspartate.

The protein belongs to the class-I pyridoxal-phosphate-dependent aminotransferase family. As to quaternary structure, homodimer. The cofactor is pyridoxal 5'-phosphate.

Its subcellular location is the cytoplasm. The catalysed reaction is L-aspartate + 2-oxoglutarate = oxaloacetate + L-glutamate. The enzyme catalyses L-arogenate + oxaloacetate = prephenate + L-aspartate. Catalyzes the reversible conversion of aspartate and 2-oxoglutarate to glutamate and oxaloacetate. Can also transaminate prephenate in the presence of aspartate. The chain is Probable aspartate/prephenate aminotransferase (aspC) from Thermus aquaticus.